Reading from the N-terminus, the 307-residue chain is Agmatinase (307 aa).

Residues histidine 128, aspartate 151, histidine 153, aspartate 155, aspartate 232, and aspartate 234 each contribute to the Mn(2+) site.

The protein belongs to the arginase family. Agmatinase subfamily. Requires Mn(2+) as cofactor.

The enzyme catalyses agmatine + H2O = urea + putrescine. The protein operates within amine and polyamine biosynthesis; putrescine biosynthesis via agmatine pathway; putrescine from agmatine: step 1/1. In terms of biological role, catalyzes the formation of putrescine from agmatine. The sequence is that of Agmatinase from Neisseria meningitidis serogroup C (strain 053442).